Reading from the N-terminus, the 122-residue chain is MRPGEIITGDGPVPLNPGRPRVRITVVNRADRAVQVGSHYHFAAVNEGLEFDRAAAWGHRLDVPAGTAVRFEPGVEREVRLVPVGGSRRVPGLRPEYAGELDGRGHEPTAPNYGEKGQGHFE.

A disordered region spans residues 92-122 (GLRPEYAGELDGRGHEPTAPNYGEKGQGHFE).

This sequence belongs to the urease beta subunit family. As to quaternary structure, heterotrimer of UreA (gamma), UreB (beta) and UreC (alpha) subunits. Three heterotrimers associate to form the active enzyme.

Its subcellular location is the cytoplasm. It carries out the reaction urea + 2 H2O + H(+) = hydrogencarbonate + 2 NH4(+). The protein operates within nitrogen metabolism; urea degradation; CO(2) and NH(3) from urea (urease route): step 1/1. This is Urease subunit beta from Saccharopolyspora erythraea (strain ATCC 11635 / DSM 40517 / JCM 4748 / NBRC 13426 / NCIMB 8594 / NRRL 2338).